The sequence spans 253 residues: DNA polymerase sliding clamp (253 aa).

It belongs to the PCNA family. In terms of assembly, homotrimer. The subunits circularize to form a toroid; DNA passes through its center. Replication factor C (RFC) is required to load the toroid on the DNA.

In terms of biological role, sliding clamp subunit that acts as a moving platform for DNA processing. Responsible for tethering the catalytic subunit of DNA polymerase and other proteins to DNA during high-speed replication. The protein is DNA polymerase sliding clamp of Methanopyrus kandleri (strain AV19 / DSM 6324 / JCM 9639 / NBRC 100938).